A 191-amino-acid polypeptide reads, in one-letter code: Insulin-like peptide INSL6 (191 aa).

An N-terminal signal peptide occupies residues 1 to 22; sequence MKQLCCSCLLWLGLLLTPFSRE. 3 cysteine pairs are disulfide-bonded: cysteine 33-cysteine 172, cysteine 45-cysteine 185, and cysteine 171-cysteine 176. A propeptide spans 53–161 (connecting peptide); the sequence is FEMEEQSPMT…RSLFWGNHSQ (109 aa).

It belongs to the insulin family.

It is found in the secreted. Its function is as follows. May have a role in sperm development and fertilization. The chain is Insulin-like peptide INSL6 (Insl6) from Mus musculus (Mouse).